A 101-amino-acid polypeptide reads, in one-letter code: Long chronological lifespan protein 1 (101 aa).

A signal peptide spans 1–17 (MKNAALCEALPLLATCS). Ser81 carries the GPI-anchor amidated serine lipid modification. A propeptide spans 82–101 (FAKPSFSFFFFLLTSLLSPF) (removed in mature form).

It is found in the cell membrane. The polypeptide is Long chronological lifespan protein 1 (LCL1) (Saccharomyces cerevisiae (strain ATCC 204508 / S288c) (Baker's yeast)).